The sequence spans 516 residues: Delta(24)-sterol reductase (516 aa).

An N-terminal signal peptide occupies residues 1–22 (MEPAVSLAVCALLFLLWVRVKG). Topologically, residues 23–31 (LEFVLIHQR) are lumenal. Residues 32–52 (WVFVCLFLLPLSLIFDIYYYV) traverse the membrane as a helical segment. At 53–516 (RAWVVFKLSS…YDKICKAARH (464 aa)) the chain is on the cytoplasmic side. In terms of domain architecture, FAD-binding PCMH-type spans 58–234 (FKLSSAPRLH…VAAEIRIIPA (177 aa)). 163–175 (TVGGLIMGTGIES) is a binding site for FAD.

Belongs to the FAD-binding oxidoreductase/transferase type 4 family. As to quaternary structure, interacts with DHCR7; this interaction regulates DHCR7 activity. FAD is required as a cofactor.

It is found in the endoplasmic reticulum membrane. The protein resides in the golgi apparatus membrane. It carries out the reaction cholesterol + NADP(+) = desmosterol + NADPH + H(+). The catalysed reaction is lanosterol + NADPH + H(+) = 24,25-dihydrolanosterol + NADP(+). The enzyme catalyses 5alpha-cholest-8-en-3beta-ol + NADP(+) = zymosterol + NADPH + H(+). Its pathway is steroid biosynthesis; cholesterol biosynthesis. Catalyzes the reduction of the delta-24 double bond of sterol intermediates during cholesterol biosynthesis. In addition to its cholesterol-synthesizing activity, can protect cells from oxidative stress by reducing caspase 3 activity during apoptosis induced by oxidative stress. Also protects against amyloid-beta peptide-induced apoptosis. The sequence is that of Delta(24)-sterol reductase (Dhcr24) from Rattus norvegicus (Rat).